A 359-amino-acid chain; its full sequence is MKSPFYRCQNTTSVEKGNSAVMGGVLFSTGLLGNLLALGLLARSGLGWCSRRPLRPLPSVFYMLVCGLTVTDLLGKCLLSPVVLAAYAQNRSLRVLAPALDNSLCQAFAFFMSFFGLSSTLQLLAMALECWLSLGHPFFYRRHITLRLGALVAPVVSAFSLAFCALPFMGFGKFVQYCPGTWCFIQMVHEEGSLSVLGYSVLYSSLMALLVLATVLCNLGAMRNLYAMHRRLQRHPRSCTRDCAEPRADGREASPQPLEELDHLLLLALMTVLFTMCSLPVIYRAYYGAFKDVKEKNRTSEEAEDLRALRFLSVISIVDPWIFIIFRSPVFRIFFHKIFIRPLRYRSRCSNSTNMESSL.

The Extracellular segment spans residues 1–21 (MKSPFYRCQNTTSVEKGNSAV). A glycan (N-linked (GlcNAc...) asparagine) is linked at Asn10. A helical membrane pass occupies residues 22-42 (MGGVLFSTGLLGNLLALGLLA). The Cytoplasmic portion of the chain corresponds to 43–59 (RSGLGWCSRRPLRPLPS). Residues 60–80 (VFYMLVCGLTVTDLLGKCLLS) form a helical membrane-spanning segment. At 81–107 (PVVLAAYAQNRSLRVLAPALDNSLCQA) the chain is on the extracellular side. A glycan (N-linked (GlcNAc...) asparagine) is linked at Asn90. Cysteines 105 and 183 form a disulfide. The chain crosses the membrane as a helical span at residues 108–128 (FAFFMSFFGLSSTLQLLAMAL). The Cytoplasmic portion of the chain corresponds to 129–150 (ECWLSLGHPFFYRRHITLRLGA). The helical transmembrane segment at 151–171 (LVAPVVSAFSLAFCALPFMGF) threads the bilayer. The Extracellular portion of the chain corresponds to 172–195 (GKFVQYCPGTWCFIQMVHEEGSLS). A helical transmembrane segment spans residues 196 to 216 (VLGYSVLYSSLMALLVLATVL). Over 217-262 (CNLGAMRNLYAMHRRLQRHPRSCTRDCAEPRADGREASPQPLEELD) the chain is Cytoplasmic. Residues 263 to 283 (HLLLLALMTVLFTMCSLPVIY) traverse the membrane as a helical segment. At 284-310 (RAYYGAFKDVKEKNRTSEEAEDLRALR) the chain is on the extracellular side. An N-linked (GlcNAc...) asparagine glycan is attached at Asn297. A helical membrane pass occupies residues 311-331 (FLSVISIVDPWIFIIFRSPVF). At 332–359 (RIFFHKIFIRPLRYRSRCSNSTNMESSL) the chain is on the cytoplasmic side.

Belongs to the G-protein coupled receptor 1 family. Expressed in retinal choroid, ciliary epithelium, longitudinal and circular ciliary muscles, iris, small intestine and platelet membranes.

The protein resides in the cell membrane. Receptor for prostaglandin D2 (PGD2). The activity of this receptor is mainly mediated by G(s) proteins that stimulate adenylate cyclase, resulting in an elevation of intracellular cAMP. A mobilization of calcium is also observed, but without formation of inositol 1,4,5-trisphosphate. Involved in PLA2G3-dependent maturation of mast cells. PLA2G3 is secreted by immature mast cells and acts on nearby fibroblasts upstream to PTDGS to synthesize PGD2, which in turn promotes mast cell maturation and degranulation via PTGDR. The protein is Prostaglandin D2 receptor (PTGDR) of Homo sapiens (Human).